The following is a 1925-amino-acid chain: Plexin-D1 (1925 aa).

The span at 1 to 21 shows a compositional bias: low complexity; that stretch reads MARRAAGGAPPSARAAAAVPL. The disordered stretch occupies residues 1-26; it reads MARRAAGGAPPSARAAAAVPLRPRPH. The N-terminal stretch at 1-48 is a signal peptide; the sequence is MARRAAGGAPPSARAAAAVPLRPRPHSRGPGLLPLPLLLLLGAARAGA. In terms of domain architecture, Sema spans 49 to 548; the sequence is LEIQRRFPSP…TSHQMARVKV (500 aa). Residues 49–1271 are Extracellular-facing; the sequence is LEIQRRFPSP…TLQLGGSETA (1223 aa). 2 disulfide bridges follow: Cys106-Cys116 and Cys142-Cys150. Residues Asn157 and Asn226 are each glycosylated (N-linked (GlcNAc...) asparagine). Disulfide bonds link Cys324–Cys447 and Cys347–Cys391. Asn483 carries N-linked (GlcNAc...) asparagine glycosylation. Intrachain disulfides connect Cys551–Cys568, Cys557–Cys602, Cys560–Cys577, Cys571–Cys583, and Cys639–Cys663. 3 IPT/TIG domains span residues 893-977, 983-1065, and 1071-1145; these read PEIR…SREQ, PTVH…NLTF, and PVIT…FING. N-linked (GlcNAc...) asparagine glycosylation occurs at Asn967. Asn1120 is a glycosylation site (N-linked (GlcNAc...) asparagine). The chain crosses the membrane as a helical span at residues 1272–1292; it reads IVVSIVICSVLLLLSVVALFV. At 1293–1925 the chain is on the cytoplasmic side; sequence FCTKSRRAER…NNIYECYSEA (633 aa).

It belongs to the plexin family. In terms of assembly, interacts with NRP1 and SEMA4A. Interacts with SH3BP1; they dissociate upon SEMA3E binding to PLXND1 allowing SH3BP1 to transduce downstream signal through RAC1 inactivation. Detected in embryonic heart and vascular endothelium, brain, dorsal root ganglia, adrenal gland, lung mesenchyme, small intestine and in the ossification centers of vertebral bodies.

It is found in the cell membrane. The protein resides in the cell projection. It localises to the lamellipodium membrane. Cell surface receptor for SEMA4A and for class 3 semaphorins, such as SEMA3A, SEMA3C and SEMA3E. Plays an important role in cell-cell signaling, and in regulating the migration of a wide spectrum of cell types. Regulates the migration of thymocytes in the medulla. Regulates endothelial cell migration. Plays an important role in ensuring the specificity of synapse formation. Mediates anti-angiogenic signaling in response to SEMA3E. Required for normal development of the heart and vasculature. This chain is Plexin-D1 (Plxnd1), found in Mus musculus (Mouse).